Reading from the N-terminus, the 99-residue chain is Citrate lyase acyl carrier protein (99 aa).

At Ser14 the chain carries O-(phosphoribosyl dephospho-coenzyme A)serine.

Belongs to the CitD family. In terms of assembly, oligomer with a subunit composition of (alpha,beta,gamma)6.

It localises to the cytoplasm. Functionally, covalent carrier of the coenzyme of citrate lyase. The chain is Citrate lyase acyl carrier protein from Edwardsiella ictaluri (strain 93-146).